The sequence spans 524 residues: Homeobox protein engrailed-like SMOX-2 (524 aa).

The interval 194–218 (SSSSSSSSSSSSSSSSSSCSTNSSS) is disordered. Positions 423–482 (LKRPRTSFTVPQLKRLSQEFEKNRYLDELRRKKLATELDLRESQVKIWFQNKRAKTKKAS) form a DNA-binding region, homeobox.

The protein belongs to the engrailed homeobox family.

The protein resides in the nucleus. The chain is Homeobox protein engrailed-like SMOX-2 (SMOX-2) from Schistosoma mansoni (Blood fluke).